A 374-amino-acid polypeptide reads, in one-letter code: Heme A synthase (374 aa).

Transmembrane regions (helical) follow at residues 22–42 (VAVW…IGAI), 107–127 (LWGR…WVRG), 135–155 (PTLA…WFMV), 172–192 (LHLG…LGLL), 209–229 (AWAA…VAGI), 265–285 (AAVQ…VLSL), 306–326 (AAAT…VVWI), and 327–347 (PLAT…VWTL). Histidine 271 is a heme binding site. Residue histidine 332 coordinates heme.

This sequence belongs to the COX15/CtaA family. Type 2 subfamily. In terms of assembly, interacts with CtaB. It depends on heme b as a cofactor.

It localises to the cell membrane. It catalyses the reaction Fe(II)-heme o + 2 A + H2O = Fe(II)-heme a + 2 AH2. It participates in porphyrin-containing compound metabolism; heme A biosynthesis; heme A from heme O: step 1/1. Its function is as follows. Catalyzes the conversion of heme O to heme A by two successive hydroxylations of the methyl group at C8. The first hydroxylation forms heme I, the second hydroxylation results in an unstable dihydroxymethyl group, which spontaneously dehydrates, resulting in the formyl group of heme A. The chain is Heme A synthase from Rhodospirillum centenum (strain ATCC 51521 / SW).